The chain runs to 174 residues: Gamma-crystallin C (174 aa).

2 consecutive Beta/gamma crystallin 'Greek key' domains span residues 2 to 40 and 41 to 83; these read GKITFYEDRGFQGRCYQCSSDCPNLQPYFSRCNSIRVDS and GCWM…CLIS. An S-methylcysteine modification is found at C23. The connecting peptide stretch occupies residues 84–87; that stretch reads DTSS. 2 Beta/gamma crystallin 'Greek key' domains span residues 88-128 and 129-171; these read HRLR…HVLE and GCWV…RRVV.

Belongs to the beta/gamma-crystallin family.

In terms of biological role, crystallins are the dominant structural components of the vertebrate eye lens. This is Gamma-crystallin C (CRYGC) from Bos taurus (Bovine).